Here is a 538-residue protein sequence, read N- to C-terminus: Zinc finger protein 155 (538 aa).

The KRAB domain occupies 8–78 (VTFKDVAVVF…GTATQREGNS (71 aa)). 11 C2H2-type zinc fingers span residues 176–198 (YTCD…QRVH), 204–226 (FMCD…QRVH), 232–254 (FKCE…RKLH), 260–282 (YICE…KRIH), 288–310 (FKCD…SMVH), 316–338 (FRCD…CMVH), 344–366 (YRCE…QVVH), 372–394 (YNCK…QRVH), 400–422 (FKCE…QRSH), 428–450 (YKCE…QRVH), and 456–478 (YNCK…KRLH). The segment at 484–506 (FKCEDCGKRLVHRTYRKDQPRDY) adopts a C2H2-type 12; degenerate zinc-finger fold.

Belongs to the krueppel C2H2-type zinc-finger protein family.

Its subcellular location is the nucleus. May be involved in transcriptional regulation. In Homo sapiens (Human), this protein is Zinc finger protein 155 (ZNF155).